The primary structure comprises 118 residues: Putative pterin-4-alpha-carbinolamine dehydratase (118 aa).

Belongs to the pterin-4-alpha-carbinolamine dehydratase family.

The catalysed reaction is (4aS,6R)-4a-hydroxy-L-erythro-5,6,7,8-tetrahydrobiopterin = (6R)-L-erythro-6,7-dihydrobiopterin + H2O. The polypeptide is Putative pterin-4-alpha-carbinolamine dehydratase (Xanthomonas campestris pv. campestris (strain B100)).